The chain runs to 130 residues: Snaclec B8 (130 aa).

3 disulfides stabilise this stretch: C2/C13, C30/C124, and C99/C116. Residues 9–125 (HEGHCYKVFK…CELAYHFICM (117 aa)) form the C-type lectin domain.

This sequence belongs to the snaclec family. As to quaternary structure, heterodimer; disulfide-linked. Expressed by the venom gland.

It is found in the secreted. Interferes with one step of hemostasis (modulation of platelet aggregation, or coagulation cascade, for example). The protein is Snaclec B8 of Macrovipera lebetinus (Levantine viper).